The sequence spans 795 residues: Plakophilin-2 (795 aa).

The required for binding to single-stranded DNA stretch occupies residues 1–318 (MAVPGSLAEC…MTLERAVNML (318 aa)). The residue at position 44 (serine 44) is a Phosphoserine. Arginine 46 carries the omega-N-methylarginine modification. A phosphoserine mark is found at serine 82, serine 132, serine 135, serine 151, serine 154, serine 155, serine 172, serine 188, and serine 232. 2 disordered regions span residues 197–233 (GTARRPPGCGSFSDAVFDNGPLKPTMPTHPPGTSHSA) and 245–274 (SQARLQSTQSRTARSSWPRSSVRSSLREPG). Residues 245 to 257 (SQARLQSTQSRTA) show a composition bias toward polar residues. Residues 258-268 (RSSWPRSSVRS) show a composition bias toward low complexity. Serine 265 and serine 287 each carry phosphoserine. 8 ARM repeats span residues 299–339 (DAQL…QHES), 343–382 (SEARKRVNQLRGIPKLLQLLKLQNEDVQRAACGALRNLVF), 385–425 (NDNK…NLSS), 484–530 (PDGR…NLSY), 585–625 (PHGI…NLTA), 633–672 (LVARMVVQKENGLQHTRKMLHVGDPSVKKTAVSLLRNLSR), 677–718 (QNEI…NLMQ), and 721–763 (YQNA…SLWA).

The protein belongs to the beta-catenin family. In terms of assembly, interacts with DSC2. Interacts with JUP. Interacts with KRT5/CK5, KRT8/CK8, KRT14/CK14, KRT18/CK18 and VIM. Interacts (via N-terminus) with MARK3/C-TAK1. Interacts with DSP. Interacts with DSG1, DSG2 and DSG3. Interacts (via N-terminus) with CTNNB1. Interacts with CDH1. Interacts with the RNA polymerase III (Pol III) complex proteins POLR3A/RPC155, POLR3F/RPC39 and POLR3C/RPC82. Interacts with CTNNA3. Interacts (via N-terminus) with SCN5A/Nav1.5. Interacts with ANK3/ANKG and GJA1/CX43. Expressed in cardiomyocytes in the heart (at protein level).

The protein localises to the nucleus. It localises to the cell junction. The protein resides in the desmosome. Its subcellular location is the cytoplasm. A component of desmosome cell-cell junctions which are required for positive regulation of cellular adhesion. Regulates focal adhesion turnover resulting in changes in focal adhesion size, cell adhesion and cell spreading, potentially via transcriptional modulation of beta-integrins. Required to maintain gingival epithelial barrier function. Important component of the desmosome that is also required for localization of desmosome component proteins such as DSC2, DSG2 and JUP to the desmosome cell-cell junction. Required for the formation of desmosome cell junctions in cardiomyocytes, thereby required for the correct formation of the heart, specifically trabeculation and formation of the atria walls. Loss of desmosome cell junctions leads to mis-localization of DSP and DSG2 resulting in disruption of cell-cell adhesion and disordered intermediate filaments. Modulates profibrotic gene expression in cardiomyocytes via regulation of DSP expression and subsequent activation of downstream TGFB1 and MAPK14/p38 MAPK signaling. Required for cardiac sodium current propagation and electrical synchrony in cardiac myocytes, via ANK3 stabilization and modulation of SCN5A/Nav1.5 localization to cell-cell junctions. Required for mitochondrial function, nuclear envelope integrity and positive regulation of SIRT3 transcription via maintaining DES localization at its nuclear envelope and cell tip anchoring points, and thereby preserving regulation of the transcriptional program. Maintenance of nuclear envelope integrity protects against DNA damage and transcriptional dysregulation of genes, especially those involved in the electron transport chain, thereby preserving mitochondrial function and protecting against superoxide radical anion generation. Binds single-stranded DNA (ssDNA). May regulate the localization of GJA1 to gap junctions in intercalated disks of the heart. This is Plakophilin-2 from Mus musculus (Mouse).